We begin with the raw amino-acid sequence, 266 residues long: Streptomycin 3''-kinase (266 aa).

The active-site Proton acceptor is the Asp-154.

Belongs to the aminoglycoside phosphotransferase family.

The catalysed reaction is streptomycin + ATP = streptomycin 3''-phosphate + ADP + H(+). Functionally, the aminoglycoside phosphotransferases achieve inactivation of their antibiotic substrates by phosphorylation. The chain is Streptomycin 3''-kinase (str) from Klebsiella pneumoniae.